A 105-amino-acid chain; its full sequence is Small ribosomal subunit protein eS24 (105 aa).

The segment at S85–E105 is disordered. The segment covering E92–E105 has biased composition (acidic residues).

This sequence belongs to the eukaryotic ribosomal protein eS24 family.

This Methanosphaera stadtmanae (strain ATCC 43021 / DSM 3091 / JCM 11832 / MCB-3) protein is Small ribosomal subunit protein eS24.